Here is a 324-residue protein sequence, read N- to C-terminus: Hydroxylase/desaturase CTB9 (324 aa).

Polar residues predominate over residues 1-11; the sequence is MTSTITTTETL. Disordered regions lie at residues 1–33 and 288–308; these read MTST…KELP and TARR…EPRA.

This sequence belongs to the asaB hydroxylase/desaturase family.

The protein operates within mycotoxin biosynthesis. In terms of biological role, hydroxylase/desaturase; part of the gene cluster that mediates the biosynthesis of cercosporin, a light-activated, non-host-selective toxin. The perylenequinone chromophore of cercosporin absorbs light energy to attain an electronically-activated triplet state and produces active oxygen species such as the hydroxyl radical, superoxide, hydrogen peroxide or singlet oxygen upon reaction with oxygen molecules. These reactive oxygen species cause damage to various cellular components including lipids, proteins and nucleic acids. The first step of cercosporin biosynthesis is performed by the polyketide synthase CTB1 which catalyzes the formation of nor-toralactone. The starter unit acyltransferase (SAT) domain of CTB1 initiates polyketide extension by the selective utilization of acetyl-CoA, which is elongated to the heptaketide in the beta-ketoacyl synthase (KS) domain by successive condensations with six malonyl units introduced by the malonyl acyltransferase (MAT) domain. The product template (PT) domain catalyzes C4-C9 and C2-C11 aldol cyclizations and dehydrations to a trihydroxynaphthalene, which is thought to be delivered to the thioesterase (TE) domain for product release. The bifunctional enzyme CTB3 then methylates nor-toralactone to toralactone before conducting an unusual oxidative aromatic ring opening. The O-methyltransferase CTB2 further methylates the nascent OH-6 of the CBT3 product, blocking further oxidation at this site before the reductase CTB6 reduces the 2-oxopropyl ketone at position C7, giving naphthalene. The FAD-dependent monooxygenase CTB5 in concert with the multicopper oxidase CTB12 are responsible for homodimerization of naphthalene with CTB7 installing the dioxepine moiety, finally producing cercosporin. The fasciclin domain-containing protein CTB11 might act with CTB5 and CTB12 whereas the roles of CTB9 and CTB10 have still to be elucidated. This Cercospora beticola (Sugarbeet leaf spot fungus) protein is Hydroxylase/desaturase CTB9.